Here is a 168-residue protein sequence, read N- to C-terminus: uncharacterized protein (168 aa).

Helical transmembrane passes span 41–61 (LLPW…LFFI) and 133–153 (KFVI…FFVL).

The protein localises to the cell membrane. This is an uncharacterized protein from Thermotoga maritima (strain ATCC 43589 / DSM 3109 / JCM 10099 / NBRC 100826 / MSB8).